The chain runs to 526 residues: Cytochrome P450 monooxygenase SAT11 (526 aa).

The chain crosses the membrane as a helical span at residues 18–38 (AFLLIAMLYLGYLLCICFYNI). Asn-125 and Asn-447 each carry an N-linked (GlcNAc...) asparagine glycan. Cys-455 provides a ligand contact to heme. An N-linked (GlcNAc...) asparagine glycan is attached at Asn-520.

It belongs to the cytochrome P450 family. Heme is required as a cofactor.

It localises to the membrane. The protein operates within mycotoxin biosynthesis. Its function is as follows. Cytochrome P450 monooxygenase; part of the satratoxin SC2 cluster involved in the biosynthesis of satratoxins, trichothecene mycotoxins that are associated with human food poisonings. Satratoxins are suggested to be made by products of multiple gene clusters (SC1, SC2 and SC3) that encode 21 proteins in all, including polyketide synthases, acetyltransferases, and other enzymes expected to modify the trichothecene skeleton. SC1 encodes 10 proteins, SAT1 to SAT10. The largest are SAT8, which encodes a putative polyketide synthase (PKS) with a conventional non-reducing architecture, and SAT10, a putative protein containing four ankyrin repeats and thus may be involved in protein scaffolding. The putative short-chain reductase SAT3 may assist the PKS in some capacity. SAT6 contains a secretory lipase domain and acts probably as a trichothecene esterase. SAT5 encodes a putative acetyltransferase, and so, with SAT6, may affect endogenous protection from toxicity. The probable transcription factor SAT9 may regulate the expression of the SC1 cluster. SC2 encodes proteins SAT11 to SAT16, the largest of which encodes the putative reducing PKS SAT13. SAT11 is a cytochrome P450 monooxygenase, while SAT14 and SAT16 are probable acetyltransferases. The SC2 cluster may be regulated by the transcription factor SAT15. SC3 is a small cluster that encodes 5 proteins, SAT17 to SAT21. SAT21 is a putative MFS-type transporter which may have a role in exporting secondary metabolites. The four other proteins putatively encoded in SC3 include the taurine hydroxylase-like protein SAT17, the O-methyltransferase SAT18, the acetyltransferase SAT19, and the Cys6-type zinc finger SAT20, the latter being probably involved in regulation of SC3 expression. This chain is Cytochrome P450 monooxygenase SAT11, found in Stachybotrys chartarum (strain CBS 109288 / IBT 7711) (Toxic black mold).